The primary structure comprises 429 residues: Glutamate-1-semialdehyde 2,1-aminomutase 1 (429 aa).

Lys-268 is subject to N6-(pyridoxal phosphate)lysine.

Belongs to the class-III pyridoxal-phosphate-dependent aminotransferase family. HemL subfamily. In terms of assembly, homodimer. Pyridoxal 5'-phosphate is required as a cofactor.

It localises to the cytoplasm. It carries out the reaction (S)-4-amino-5-oxopentanoate = 5-aminolevulinate. It functions in the pathway porphyrin-containing compound metabolism; protoporphyrin-IX biosynthesis; 5-aminolevulinate from L-glutamyl-tRNA(Glu): step 2/2. The protein is Glutamate-1-semialdehyde 2,1-aminomutase 1 of Staphylococcus saprophyticus subsp. saprophyticus (strain ATCC 15305 / DSM 20229 / NCIMB 8711 / NCTC 7292 / S-41).